Consider the following 241-residue polypeptide: Ashwin (241 aa).

Disordered regions lie at residues 1 to 21, 82 to 102, and 212 to 241; these read MAAQGRGRVGGGKEERVSARS, KMMEKKRKQNEPKSENKSVTA, and KRSVPKDESDLPNDLKPTEAKKKIQHCTWP. Positions 11–21 are enriched in basic and acidic residues; that stretch reads GGKEERVSARS.

The protein belongs to the ashwin family.

The protein resides in the nucleus. The chain is Ashwin from Gallus gallus (Chicken).